The primary structure comprises 362 residues: MSTASVMDLVRDDLRAFAGYASARTSALQGDVWLNANESAWGNPADPDASTRRYPDPQPKGLRAALAQLYGCAPEQLLIGRGSDEAIDLLVRGLCVPERDAVVVTPPVFGMYAVCARLQNAPLVEVPLVDGADGLHADVPVIVQAALDAKAKLVFLCSPSNPAGSAIPLAEIEVALQALQGKAVVVVDEAYGEFSDVPSAIGLLARYDNLAVLRTLSKAHALAAARIGSLIANAELIALLRRCQAPYPVPTPCAVMAEQALSAPALAVTQRRVTEIRAERARLHAALVQVAGVRQVYPSQGNFLLVRFDDAEAAFQALLEAGVVVRDQRAVPRLSDALRITIGTPEQNDRVLGALQRKQEAA.

Lysine 218 is modified (N6-(pyridoxal phosphate)lysine).

Belongs to the class-II pyridoxal-phosphate-dependent aminotransferase family. Histidinol-phosphate aminotransferase subfamily. As to quaternary structure, homodimer. Requires pyridoxal 5'-phosphate as cofactor.

It carries out the reaction L-histidinol phosphate + 2-oxoglutarate = 3-(imidazol-4-yl)-2-oxopropyl phosphate + L-glutamate. It functions in the pathway amino-acid biosynthesis; L-histidine biosynthesis; L-histidine from 5-phospho-alpha-D-ribose 1-diphosphate: step 7/9. This chain is Histidinol-phosphate aminotransferase, found in Xanthomonas campestris pv. campestris (strain B100).